Here is a 533-residue protein sequence, read N- to C-terminus: Chromosomal replication initiator protein DnaA (533 aa).

A domain I, interacts with DnaA modulators region spans residues M1–P72. Residues P72–S196 form a domain II region. Residues A83–A120 form a disordered region. Residues P96 to P110 are compositionally biased toward pro residues. Over residues G111–A120 the composition is skewed to low complexity. Residues K197 to S413 form a domain III, AAA+ region region. Positions 241, 243, 244, and 245 each coordinate ATP. The domain IV, binds dsDNA stretch occupies residues K414 to G533.

Belongs to the DnaA family. In terms of assembly, oligomerizes as a right-handed, spiral filament on DNA at oriC.

The protein resides in the cytoplasm. Functionally, plays an essential role in the initiation and regulation of chromosomal replication. ATP-DnaA binds to the origin of replication (oriC) to initiate formation of the DNA replication initiation complex once per cell cycle. Binds the DnaA box (a 9 base pair repeat at the origin) and separates the double-stranded (ds)DNA. Forms a right-handed helical filament on oriC DNA; dsDNA binds to the exterior of the filament while single-stranded (ss)DNA is stabiized in the filament's interior. The ATP-DnaA-oriC complex binds and stabilizes one strand of the AT-rich DNA unwinding element (DUE), permitting loading of DNA polymerase. After initiation quickly degrades to an ADP-DnaA complex that is not apt for DNA replication. Binds acidic phospholipids. This Burkholderia pseudomallei (strain 1710b) protein is Chromosomal replication initiator protein DnaA.